We begin with the raw amino-acid sequence, 233 residues long: NAD(P)H-hydrate epimerase (233 aa).

Positions 15-218 (SQQFDVELMS…KLQEKYNFIV (204 aa)) constitute a YjeF N-terminal domain. 67–71 (NNGGD) contributes to the (6S)-NADPHX binding site. The K(+) site is built by N68 and D128. Residues 132 to 138 (GFSFKPP), Y143, and D161 contribute to the (6S)-NADPHX site. Residue S164 coordinates K(+).

The protein belongs to the NnrE/AIBP family. It depends on K(+) as a cofactor.

The enzyme catalyses (6R)-NADHX = (6S)-NADHX. The catalysed reaction is (6R)-NADPHX = (6S)-NADPHX. In terms of biological role, catalyzes the epimerization of the S- and R-forms of NAD(P)HX, a damaged form of NAD(P)H that is a result of enzymatic or heat-dependent hydration. This is a prerequisite for the S-specific NAD(P)H-hydrate dehydratase to allow the repair of both epimers of NAD(P)HX. The sequence is that of NAD(P)H-hydrate epimerase from Paramecium tetraurelia.